The following is a 171-amino-acid chain: Shikimate kinase (171 aa).

Position 13–18 (13–18 (GVGKST)) interacts with ATP. Residue Ser17 participates in Mg(2+) binding. Substrate contacts are provided by Asp35, Arg59, and Gly81. An ATP-binding site is contributed by Arg118. Residue Arg136 coordinates substrate. Residue Arg153 participates in ATP binding.

This sequence belongs to the shikimate kinase family. Monomer. The cofactor is Mg(2+).

It is found in the cytoplasm. The catalysed reaction is shikimate + ATP = 3-phosphoshikimate + ADP + H(+). Its pathway is metabolic intermediate biosynthesis; chorismate biosynthesis; chorismate from D-erythrose 4-phosphate and phosphoenolpyruvate: step 5/7. Functionally, catalyzes the specific phosphorylation of the 3-hydroxyl group of shikimic acid using ATP as a cosubstrate. The protein is Shikimate kinase of Streptomyces avermitilis (strain ATCC 31267 / DSM 46492 / JCM 5070 / NBRC 14893 / NCIMB 12804 / NRRL 8165 / MA-4680).